The chain runs to 207 residues: 3-isopropylmalate dehydratase small subunit (207 aa).

The protein belongs to the LeuD family. LeuD type 1 subfamily. As to quaternary structure, heterodimer of LeuC and LeuD.

The enzyme catalyses (2R,3S)-3-isopropylmalate = (2S)-2-isopropylmalate. It functions in the pathway amino-acid biosynthesis; L-leucine biosynthesis; L-leucine from 3-methyl-2-oxobutanoate: step 2/4. Catalyzes the isomerization between 2-isopropylmalate and 3-isopropylmalate, via the formation of 2-isopropylmaleate. This Gluconacetobacter diazotrophicus (strain ATCC 49037 / DSM 5601 / CCUG 37298 / CIP 103539 / LMG 7603 / PAl5) protein is 3-isopropylmalate dehydratase small subunit.